Consider the following 272-residue polypeptide: Cell division protein FtsQ (272 aa).

The Cytoplasmic segment spans residues 1–43 (MEYNPPNTRERIVARRQRMRRNSTEPVVPGWRWRLREGLRSGR). The chain crosses the membrane as a helical span at residues 44 to 64 (IVSGIVFVISCFALFYVLFSS). The Extracellular portion of the chain corresponds to 65–272 (RFRVQTVEVV…FYQYRPDGSS (208 aa)). The 68-residue stretch at 66-133 (FRVQTVEVVG…DRARIVIVER (68 aa)) folds into the POTRA domain.

It belongs to the FtsQ/DivIB family. FtsQ subfamily.

It localises to the cell membrane. Functionally, essential cell division protein. The chain is Cell division protein FtsQ from Chloroflexus aurantiacus (strain ATCC 29366 / DSM 635 / J-10-fl).